A 66-amino-acid chain; its full sequence is Protein translocase subunit SecE (66 aa).

A helical transmembrane segment spans residues Leu41 to Leu61.

This sequence belongs to the SecE/SEC61-gamma family. As to quaternary structure, component of the Sec protein translocase complex. Heterotrimer consisting of SecY (alpha), SecG (beta) and SecE (gamma) subunits. The heterotrimers can form oligomers, although 1 heterotrimer is thought to be able to translocate proteins. Interacts with the ribosome. May interact with SecDF, and other proteins may be involved.

It localises to the cell membrane. Functionally, essential subunit of the Sec protein translocation channel SecYEG. Clamps together the 2 halves of SecY. May contact the channel plug during translocation. The chain is Protein translocase subunit SecE from Archaeoglobus fulgidus (strain ATCC 49558 / DSM 4304 / JCM 9628 / NBRC 100126 / VC-16).